The following is a 172-amino-acid chain: Large ribosomal subunit protein uL11m (172 aa).

This sequence belongs to the universal ribosomal protein uL11 family.

It is found in the mitochondrion. This chain is Large ribosomal subunit protein uL11m (mrpl11), found in Dictyostelium discoideum (Social amoeba).